The primary structure comprises 230 residues: MKTLVICSGGLDSVSLAHKVAAEHDLIGLISFDYGQRHRKELDFAARAATRLGVPHDLIDMRQIGAHLSGSALTDDVDVPDGHYAEDTMKITVVPNRNAIMLAIAFGIAAAKQADAVATAVHGGDHFIYPDCRPGFTQAFEAMQAQALDGYASVRLYTPFVHEPKSAIVTEGERHNTPFADTWSCYKGGEVHCGRCGTCVERREAFHLAGVADPTPYADPEFWRAAVEGR.

7 to 17 (CSGGLDSVSLA) serves as a coordination point for ATP. Positions 185, 193, 196, and 199 each coordinate Zn(2+).

This sequence belongs to the QueC family. Requires Zn(2+) as cofactor.

It catalyses the reaction 7-carboxy-7-deazaguanine + NH4(+) + ATP = 7-cyano-7-deazaguanine + ADP + phosphate + H2O + H(+). It participates in purine metabolism; 7-cyano-7-deazaguanine biosynthesis. Catalyzes the ATP-dependent conversion of 7-carboxy-7-deazaguanine (CDG) to 7-cyano-7-deazaguanine (preQ(0)). The sequence is that of 7-cyano-7-deazaguanine synthase from Ruegeria pomeroyi (strain ATCC 700808 / DSM 15171 / DSS-3) (Silicibacter pomeroyi).